The primary structure comprises 229 residues: Bcl-2-like protein 1 (229 aa).

Positions 4–24 (SNRELVIDFVSYKLSQRGHCW) match the BH4 motif. The short motif at 82–96 (VRQALRDAGDEFELR) is the BH3 element. Residues 125-144 (ELFHDGVNWGRIVAFFSFGG) carry the BH1 motif. A BH2 motif is present at residues 176-191 (PWIQENGGWERFVDLY). The chain crosses the membrane as a helical span at residues 206 to 223 (FNKWLLTGATVAGVLLLG).

The protein belongs to the Bcl-2 family. Highest expression in organs with lymphoid development.

It localises to the mitochondrion membrane. It is found in the nucleus membrane. The protein resides in the mitochondrion matrix. Its subcellular location is the cytoplasm. The protein localises to the cytoskeleton. It localises to the microtubule organizing center. It is found in the centrosome. The protein resides in the cytosol. Its subcellular location is the cytoplasmic vesicle. The protein localises to the secretory vesicle. It localises to the synaptic vesicle membrane. Its function is as follows. Dominant regulator of apoptotic cell death. The long form displays cell death repressor activity, whereas the short isoform promotes apoptosis. Also acts as a regulator of G2 checkpoint and progression to cytokinesis during mitosis. The polypeptide is Bcl-2-like protein 1 (BCL2L1) (Gallus gallus (Chicken)).